The sequence spans 141 residues: Large ribosomal subunit protein uL11 (141 aa).

It belongs to the universal ribosomal protein uL11 family. Part of the ribosomal stalk of the 50S ribosomal subunit. Interacts with L10 and the large rRNA to form the base of the stalk. L10 forms an elongated spine to which L12 dimers bind in a sequential fashion forming a multimeric L10(L12)X complex. Post-translationally, one or more lysine residues are methylated.

Forms part of the ribosomal stalk which helps the ribosome interact with GTP-bound translation factors. The chain is Large ribosomal subunit protein uL11 from Clostridium botulinum (strain Kyoto / Type A2).